A 343-amino-acid chain; its full sequence is Thromboxane A2 receptor (343 aa).

The Extracellular portion of the chain corresponds to 1-29; sequence MWPNGSSLGPCFRPTNITLEERRLIASPW. Residues Asn-4 and Asn-16 are each glycosylated (N-linked (GlcNAc...) asparagine). A helical membrane pass occupies residues 30–52; sequence FAASFCVVGLASNLLALSVLAGA. Residues 53–66 lie on the Cytoplasmic side of the membrane; that stretch reads RQGGSHTRSSFLTF. The chain crosses the membrane as a helical span at residues 67 to 87; the sequence is LCGLVLTDFLGLLVTGTIVVS. Residues 88–106 lie on the Extracellular side of the membrane; the sequence is QHAALFEWHAVDPGCRLCR. A disulfide bridge links Cys-105 with Cys-183. The helical transmembrane segment at 107–128 threads the bilayer; that stretch reads FMGVVMIFFGLSPLLLGAAMAS. Residues 129–149 lie on the Cytoplasmic side of the membrane; that stretch reads ERYLGITRPFSRPAVASQRRA. Residues 150 to 172 traverse the membrane as a helical segment; sequence WATVGLVWAAALALGLLPLLGVG. The Extracellular portion of the chain corresponds to 173 to 193; sequence RYTVQYPGSWCFLTLGAESGD. Residues 194-219 traverse the membrane as a helical segment; it reads VAFGLLFSMLGGLSVGLSFLLNTVSV. The Cytoplasmic segment spans residues 220-246; that stretch reads ATLCHVYHGQEAAQQRPRDSEVEMMAQ. The chain crosses the membrane as a helical span at residues 247-270; that stretch reads LLGIMVVASVCWLPLLVFIAQTVL. At 271-289 the chain is on the extracellular side; it reads RNPPAMSPAGQLSRTTEKE. The chain crosses the membrane as a helical span at residues 290-311; sequence LLIYLRVATWNQILDPWVYILF. The Cytoplasmic segment spans residues 312 to 343; the sequence is RRAVLRRLQPRLSTRPRSLSLQPQLTQRSGLQ. Ser-329 and Ser-331 each carry phosphoserine.

Belongs to the G-protein coupled receptor 1 family. Interacts with RPGRIP1L. Interacts with PSMA3. Interacts with RACK1; the interaction regulates TBXA2R cell surface expression.

The protein resides in the cell membrane. Receptor for thromboxane A2 (TXA2), a potent stimulator of platelet aggregation. The activity of this receptor is mediated by a G-protein that activates a phosphatidylinositol-calcium second messenger system. In the kidney, the binding of TXA2 to glomerular TP receptors causes intense vasoconstriction. Activates phospholipase C. Its function is as follows. Activates adenylyl cyclase. In terms of biological role, inhibits adenylyl cyclase. The sequence is that of Thromboxane A2 receptor (TBXA2R) from Homo sapiens (Human).